A 740-amino-acid chain; its full sequence is ATP-dependent RNA helicase DDX1 (740 aa).

The necessary for interaction with HNRNPK stretch occupies residues 1–295 (MAAFSEMGVM…APKALIVEPS (295 aa)). An interaction with dsRNA region spans residues 1-448 (MAAFSEMGVM…DTVHHVVVPV (448 aa)). The tract at residues 1–525 (MAAFSEMGVM…KIDCDNLEQY (525 aa)) is necessary for interaction with RELA. The region spanning 2–428 (AAFSEMGVMP…SEKIMHFPTW (427 aa)) is the Helicase ATP-binding domain. 46-53 (AETGSGKT) serves as a coordination point for ATP. Residues 70 to 247 (DQQEGKKGKT…LKFNFGEEEF (178 aa)) form the B30.2/SPRY domain. An N6-acetyllysine mark is found at K239 and K268. At K281 the chain carries N6-acetyllysine; alternate. K281 participates in a covalent cross-link: Glycyl lysine isopeptide (Lys-Gly) (interchain with G-Cter in SUMO2); alternate. Positions 370–373 (DEAD) match the DEAD box motif. A Phosphoserine modification is found at S481. One can recognise a Helicase C-terminal domain in the interval 493–681 (KGEYAVRAIK…QVEPDIKVPV (189 aa)). The necessary for interaction with HNRNPK stretch occupies residues 525–740 (YFMQQGGGPD…YLPNQLFRTF (216 aa)).

Belongs to the DEAD box helicase family. DDX1 subfamily. In terms of assembly, found in a multi-helicase-TICAM1 complex at least composed of DHX36, DDX1, DDX21 and TICAM1; this complex exists in resting cells with or without poly(I:C) RNA ligand stimulation. Interacts with DHX36. Interacts (via B30.2/SPRY domain) with DDX21 (via N-terminus); this interaction serves as bridges to TICAM1. Interacts with FAM98A (via N- and C-terminus). Interacts with PHF5A (via C-terminus). Interacts with MBNL1. Interacts with CSTF2. Interacts with HNRNPK. Interacts with ATM. Interacts with RELA (via C-terminus). Component of the tRNA-splicing ligase complex. Interacts with PQBP1. Interacts with ERCC6. Phosphorylated by ATM kinase; phosphorylation is increased in response to ionizing radiation (IR).

It is found in the nucleus. The protein resides in the cytoplasm. It localises to the cytoplasmic granule. Its subcellular location is the cytosol. The protein localises to the mitochondrion. It catalyses the reaction ATP + H2O = ADP + phosphate + H(+). Its function is as follows. Acts as an ATP-dependent RNA helicase, able to unwind both RNA-RNA and RNA-DNA duplexes. Possesses 5' single-stranded RNA overhang nuclease activity. Possesses ATPase activity on various RNA, but not DNA polynucleotides. May play a role in RNA clearance at DNA double-strand breaks (DSBs), thereby facilitating the template-guided repair of transcriptionally active regions of the genome. Together with RELA, acts as a coactivator to enhance NF-kappa-B-mediated transcriptional activation. Acts as a positive transcriptional regulator of cyclin CCND2 expression. Binds to the cyclin CCND2 promoter region. Associates with chromatin at the NF-kappa-B promoter region via association with RELA. Binds to poly(A) RNA. May be involved in 3'-end cleavage and polyadenylation of pre-mRNAs. Component of the tRNA-splicing ligase complex required to facilitate the enzymatic turnover of catalytic subunit RTCB: together with archease (ZBTB8OS), acts by facilitating the guanylylation of RTCB, a key intermediate step in tRNA ligation. Component of a multi-helicase-TICAM1 complex that acts as a cytoplasmic sensor of viral double-stranded RNA (dsRNA) and plays a role in the activation of a cascade of antiviral responses including the induction of pro-inflammatory cytokines via the adapter molecule TICAM1. Specifically binds (via helicase ATP-binding domain) on both short and long poly(I:C) dsRNA. This chain is ATP-dependent RNA helicase DDX1 (DDX1), found in Macaca fascicularis (Crab-eating macaque).